The primary structure comprises 302 residues: Recombination-associated protein RdgC (302 aa).

The protein belongs to the RdgC family.

It is found in the cytoplasm. The protein localises to the nucleoid. In terms of biological role, may be involved in recombination. The sequence is that of Recombination-associated protein RdgC from Tolumonas auensis (strain DSM 9187 / NBRC 110442 / TA 4).